Here is an 88-residue protein sequence, read N- to C-terminus: Molybdopterin synthase sulfur carrier subunit (88 aa).

Glycine 88 is modified (1-thioglycine; alternate). Residue glycine 88 is modified to Glycyl adenylate; alternate.

Belongs to the MoaD family. MOCS2A subfamily. In terms of assembly, heterotetramer; composed of 2 small (MOCS2A) and 2 large (MOCS2B) subunits. C-terminal thiocarboxylation occurs in 2 steps, it is first acyl-adenylated (-COAMP) via the hesA/moeB/thiF part of MOCS3, then thiocarboxylated (-COSH) via the rhodanese domain of MOCS3.

The protein localises to the cytoplasm. The protein resides in the cytosol. It functions in the pathway cofactor biosynthesis; molybdopterin biosynthesis. In terms of biological role, acts as a sulfur carrier required for molybdopterin biosynthesis. Component of the molybdopterin synthase complex that catalyzes the conversion of precursor Z into molybdopterin by mediating the incorporation of 2 sulfur atoms into precursor Z to generate a dithiolene group. In the complex, serves as sulfur donor by being thiocarboxylated (-COSH) at its C-terminus by MOCS3. After interaction with MOCS2B, the sulfur is then transferred to precursor Z to form molybdopterin. This Mus musculus (Mouse) protein is Molybdopterin synthase sulfur carrier subunit.